We begin with the raw amino-acid sequence, 243 residues long: HTH-type transcriptional regulator MlrA (243 aa).

The HTH merR-type domain maps to leucine 3–serine 72. The H-T-H motif DNA-binding region spans isoleucine 6–arginine 25.

Functionally, transcriptional activator of csgD, which is required for production of the curli (AgF). In Salmonella typhimurium (strain SL1344), this protein is HTH-type transcriptional regulator MlrA.